The following is a 411-amino-acid chain: MATINDNYLKLKAGYLFPEIARRVNAFAEANPDAKIIRLGIGDVTEPLPAACRSAMIQAVEEMGDRSSFKGYGPEQGYAWLREKIATQDFQARGADVDAAEIFISDGSKCDTGNILDIFGDNNIIAVTDPVYPVYVDTNVMAGHTGAANEKGEFEGLVYLPVTAENNFTAEIPSQKVDLIYLCFPNNPTGATATKEHLQAWVDYAKAHNSIIFFDAAYESYITDPSLPHSIYEIEGAREVAIEFRSFSKNAGFTGTRCALTVVPKTLKAKAADGSDVELWKLWNRRQSTKFNGVSYIVQRGAEAVYSEAGQAQVKALVSFYLDNAKIIREKLTAAGLSVYGGVNAPYVWVKTPNGLSSWDFFDQLLQTVNVVGTPGSGFGAAGEGYFRVSAFNSRENVEEAMKRITEKFKL.

Positions 15 and 42 each coordinate substrate. Pyridoxal 5'-phosphate is bound by residues tyrosine 72, 108-109 (SK), tyrosine 132, asparagine 187, tyrosine 218, and 246-248 (SFS). Substrate is bound by residues lysine 109, tyrosine 132, and asparagine 187. Lysine 249 carries the N6-(pyridoxal phosphate)lysine modification. Pyridoxal 5'-phosphate is bound by residues arginine 257 and asparagine 292. The substrate site is built by asparagine 292 and arginine 388.

This sequence belongs to the class-I pyridoxal-phosphate-dependent aminotransferase family. LL-diaminopimelate aminotransferase subfamily. In terms of assembly, homodimer. Requires pyridoxal 5'-phosphate as cofactor.

The catalysed reaction is (2S,6S)-2,6-diaminopimelate + 2-oxoglutarate = (S)-2,3,4,5-tetrahydrodipicolinate + L-glutamate + H2O + H(+). The protein operates within amino-acid biosynthesis; L-lysine biosynthesis via DAP pathway; LL-2,6-diaminopimelate from (S)-tetrahydrodipicolinate (aminotransferase route): step 1/1. Functionally, involved in the synthesis of meso-diaminopimelate (m-DAP or DL-DAP), required for both lysine and peptidoglycan biosynthesis. Catalyzes the direct conversion of tetrahydrodipicolinate to LL-diaminopimelate. The sequence is that of LL-diaminopimelate aminotransferase 1 from Nostoc sp. (strain PCC 7120 / SAG 25.82 / UTEX 2576).